Consider the following 445-residue polypeptide: Rab GDP dissociation inhibitor beta (445 aa).

The residue at position 1 (Met-1) is an N-acetylmethionine. An N6-succinyllysine modification is found at Lys-57. Residue Ser-61 is modified to Phosphoserine. The residue at position 112 (Lys-112) is an N6-acetyllysine. Ser-130 carries the post-translational modification Phosphoserine. Position 269 is an N6-acetyllysine (Lys-269). Ser-382 carries the phosphoserine modification.

This sequence belongs to the Rab GDI family. As to quaternary structure, interacts with RHOH. Interacts with the GDP-bound inactive forms of RAB3A, RAB3B, RAB3C, RAB5A, RAB5B, RAB5C, RAB8A, RAB8B, RAB10, RAB12, RAB35, and RAB43; binds RAB3D to a lesser extent. Interacts with DZIP1; this interaction negatively regulates the interaction of GDI2 with GDP-bound RAB8A. In terms of tissue distribution, ubiquitous.

The protein resides in the cytoplasm. Its subcellular location is the membrane. It is found in the golgi apparatus. The protein localises to the trans-Golgi network. In terms of biological role, GDP-dissociation inhibitor preventing the GDP to GTP exchange of most Rab proteins. By keeping these small GTPases in their inactive GDP-bound form regulates intracellular membrane trafficking. Negatively regulates protein transport to the cilium and ciliogenesis through the inhibition of RAB8A. This chain is Rab GDP dissociation inhibitor beta (GDI2), found in Homo sapiens (Human).